The chain runs to 84 residues: Small ribosomal subunit protein uS17 (84 aa).

The protein belongs to the universal ribosomal protein uS17 family. Part of the 30S ribosomal subunit.

In terms of biological role, one of the primary rRNA binding proteins, it binds specifically to the 5'-end of 16S ribosomal RNA. The sequence is that of Small ribosomal subunit protein uS17 from Actinobacillus pleuropneumoniae serotype 5b (strain L20).